Consider the following 372-residue polypeptide: Aminomethyltransferase (372 aa).

Belongs to the GcvT family. As to quaternary structure, the glycine cleavage system is composed of four proteins: P, T, L and H.

It carries out the reaction N(6)-[(R)-S(8)-aminomethyldihydrolipoyl]-L-lysyl-[protein] + (6S)-5,6,7,8-tetrahydrofolate = N(6)-[(R)-dihydrolipoyl]-L-lysyl-[protein] + (6R)-5,10-methylene-5,6,7,8-tetrahydrofolate + NH4(+). Its function is as follows. The glycine cleavage system catalyzes the degradation of glycine. The sequence is that of Aminomethyltransferase from Rubrobacter xylanophilus (strain DSM 9941 / JCM 11954 / NBRC 16129 / PRD-1).